The chain runs to 103 residues: Small ribosomal subunit protein uS14c (103 aa).

Belongs to the universal ribosomal protein uS14 family. Part of the 30S ribosomal subunit.

Its subcellular location is the plastid. It localises to the chloroplast. Its function is as follows. Binds 16S rRNA, required for the assembly of 30S particles. The polypeptide is Small ribosomal subunit protein uS14c (Agrostis stolonifera (Creeping bentgrass)).